The primary structure comprises 377 residues: MASPRFNSIIIILFICTISLSIVSISCKEDLKTNQAALFAFGDSLFEAGNNNYFDSISSFRSNFWPYGKTTFKFPTGRVSDGRIMIDFIAEYAWLPLIPPNLQPGYSNSQLTYGLNFATTAAGVFAGTFPGSVTNLSKDLGTQLNNFKNVEKTLRSNLGDAEARRVISKAVYLFHIGANDYQYPFFANTSTFSNTTKERFIDFVIGNTTTVIEELYKLGARKFGFLSLGPFGCTPSALIINSTKIGSCFEPVTELINLHNQEFPKVLRRLERRLSGFKYALHDFHTSLSQRINNPSRYGFKEGEMACCGSGPLRGINTCGFRNGPSQGYKLCENADDYVFFDPSHLTETAHQQIAELIWSGPPNVTAPYNLKTLFRL.

The N-terminal stretch at 1-21 is a signal peptide; it reads MASPRFNSIIIILFICTISLS. Ser44 functions as the Nucleophile in the catalytic mechanism. N-linked (GlcNAc...) asparagine glycans are attached at residues Asn135, Asn188, Asn194, Asn207, and Asn241. Catalysis depends on residues Asp342 and His345. A glycan (N-linked (GlcNAc...) asparagine) is linked at Asn364.

Belongs to the 'GDSL' lipolytic enzyme family.

Its subcellular location is the secreted. This Arabidopsis thaliana (Mouse-ear cress) protein is GDSL esterase/lipase 4 (GLIP4).